We begin with the raw amino-acid sequence, 154 residues long: uncharacterized protein (154 aa).

The N-terminal stretch at 1-19 (MWSLKSTLCIALLVTYSVA) is a signal peptide. 2 consecutive ShKT domains span residues 67-102 (CADDPNTDCTQYTSLCSNAKYTPLLQQFCPKTCGFC) and 113-150 (CVDSSTNCANWEKNGFCSSTFYDCANKKQYCAKTCKLC). Cystine bridges form between cysteine 67–cysteine 102, cysteine 75–cysteine 95, cysteine 82–cysteine 99, cysteine 113–cysteine 150, cysteine 120–cysteine 143, and cysteine 129–cysteine 147.

This is an uncharacterized protein from Caenorhabditis elegans.